The sequence spans 84 residues: Esculentin-1SIa (84 aa).

An N-terminal signal peptide occupies residues 1-22; that stretch reads MFTLKKPLLLIVLLGIISLSLC. The propeptide at 23–36 is removed in mature form; it reads EQERAADEDEGSEI. The cysteines at positions 78 and 84 are disulfide-linked.

In terms of tissue distribution, expressed by the skin glands.

Its subcellular location is the secreted. Functionally, has antimicrobial activity against Gram-negative bacterium E.coli ATCC 8739 (MIC=6.3 ug), against Gram positive bacteria S.aureus ATCC 6538 (MIC=3.1 ug), methicillin-resistant S.aureus ATCC 43300 (MIC=25 ug) and B.subtilis ATCC 6633 (MIC=25 ug). Has no activity against fungus C.albicans ATCC 90028. The chain is Esculentin-1SIa from Odorrana ishikawae (Ishikawa's frog).